An 892-amino-acid chain; its full sequence is DNA mismatch repair protein MutS (892 aa).

An ATP-binding site is contributed by 607–614; that stretch reads GPNMSGKS.

This sequence belongs to the DNA mismatch repair MutS family.

Functionally, this protein is involved in the repair of mismatches in DNA. It is possible that it carries out the mismatch recognition step. This protein has a weak ATPase activity. This is DNA mismatch repair protein MutS from Bacillus cereus (strain AH820).